A 932-amino-acid polypeptide reads, in one-letter code: Glycine dehydrogenase (decarboxylating) (932 aa).

Lys685 is modified (N6-(pyridoxal phosphate)lysine).

Belongs to the GcvP family. In terms of assembly, the glycine cleavage system is composed of four proteins: P, T, L and H. Pyridoxal 5'-phosphate is required as a cofactor.

It catalyses the reaction N(6)-[(R)-lipoyl]-L-lysyl-[glycine-cleavage complex H protein] + glycine + H(+) = N(6)-[(R)-S(8)-aminomethyldihydrolipoyl]-L-lysyl-[glycine-cleavage complex H protein] + CO2. The glycine cleavage system catalyzes the degradation of glycine. The P protein binds the alpha-amino group of glycine through its pyridoxal phosphate cofactor; CO(2) is released and the remaining methylamine moiety is then transferred to the lipoamide cofactor of the H protein. The protein is Glycine dehydrogenase (decarboxylating) of Brucella suis (strain ATCC 23445 / NCTC 10510).